The sequence spans 119 residues: Large ribosomal subunit protein bL20 (119 aa).

This sequence belongs to the bacterial ribosomal protein bL20 family.

Its function is as follows. Binds directly to 23S ribosomal RNA and is necessary for the in vitro assembly process of the 50S ribosomal subunit. It is not involved in the protein synthesizing functions of that subunit. In Nitrosococcus oceani (strain ATCC 19707 / BCRC 17464 / JCM 30415 / NCIMB 11848 / C-107), this protein is Large ribosomal subunit protein bL20.